We begin with the raw amino-acid sequence, 220 residues long: GILT-like protein CBG03282 (220 aa).

An N-terminal signal peptide occupies residues 1-22 (MTIIRTLFVYYSFLFILVLCSS). Asn131 carries N-linked (GlcNAc...) asparagine glycosylation.

This sequence belongs to the GILT family.

Its subcellular location is the secreted. The polypeptide is GILT-like protein CBG03282 (Caenorhabditis briggsae).